The sequence spans 287 residues: Iodotyrosine deiodinase (287 aa).

A helical membrane pass occupies residues 15–34; the sequence is HWPSLFITLALIWIVKRLFF. FMN contacts are provided by residues 96 to 100, Ser125, and 125 to 126; these read RRSIR and SG. Residues Ala127, Glu154, Tyr158, and Lys179 each coordinate 3,5-diiodo-L-tyrosine. Residues Ala127, Glu154, Tyr158, and Lys179 each coordinate 3-iodo-L-tyrosine. FMN contacts are provided by residues 235-237 and Arg277; that span reads VTT.

It belongs to the nitroreductase family. Homodimer. It depends on FMN as a cofactor. Expressed in spermatocytes.

The protein resides in the cell membrane. It carries out the reaction 2 iodide + L-tyrosine + 2 NADP(+) = 3,5-diiodo-L-tyrosine + 2 NADPH + H(+). It catalyses the reaction iodide + L-tyrosine + NADP(+) = 3-iodo-L-tyrosine + NADPH. The enzyme catalyses 3-iodo-L-tyrosine + iodide + NADP(+) = 3,5-diiodo-L-tyrosine + NADPH + H(+). The catalysed reaction is L-tyrosine + chloride + NADP(+) = 3-chloro-L-tyrosine + NADPH. It carries out the reaction bromide + L-tyrosine + NADP(+) = 3-bromo-L-tyrosine + NADPH. Functionally, catalyzes the dehalogenation of halotyrosines such as 3-bromo-L-tyrosine, 3-chloro-L-tyrosine, 3-iodo-L-tyrosine and 3,5-diiodo-L-tyrosine. Activity towards 3-fluoro-L-tyrosine is weak. Important for male and female fertility. May be involved in maintaining the viability of sperm, both during development in the testes and storage in the female spermatheca. This chain is Iodotyrosine deiodinase, found in Drosophila melanogaster (Fruit fly).